The chain runs to 149 residues: Calmodulin-1 (149 aa).

The residue at position 2 (Ala2) is an N-acetylalanine. EF-hand domains lie at 8 to 43 (EQIA…LGQN), 44 to 79 (PTEA…KMKD), 81 to 116 (DSEE…LGEK), and 117 to 149 (LTDE…MTAK). Ca(2+) is bound at residue Asp21. An N6-acetyllysine; alternate modification is found at Lys22. Residue Lys22 forms a Glycyl lysine isopeptide (Lys-Gly) (interchain with G-Cter in SUMO2); alternate linkage. Lys22 is covalently cross-linked (Glycyl lysine isopeptide (Lys-Gly) (interchain with G-Cter in ubiquitin); alternate). The Ca(2+) site is built by Asp23, Asp25, Thr27, and Glu32. The residue at position 45 (Thr45) is a Phosphothreonine; by CaMK4. Ca(2+) contacts are provided by Asp57, Asp59, Asn61, Thr63, and Glu68. Residues 77 to 149 (MKDTDSEEEI…EEFVQMMTAK (73 aa)) form a necessary and sufficient for interaction with PCP4 region. At Ser82 the chain carries Phosphoserine. Ca(2+) is bound at residue Asp94. Residue Lys95 is modified to N6-acetyllysine. Ca(2+)-binding residues include Asp96, Asn98, and Tyr100. Tyr100 bears the Phosphotyrosine mark. Phosphoserine is present on Ser102. Glu105 is a Ca(2+) binding site. Thr111 carries the phosphothreonine modification. At Lys116 the chain carries N6,N6,N6-trimethyllysine; alternate. Lys116 is modified (N6-methyllysine; alternate). Ca(2+)-binding residues include Asp130, Asp132, Asp134, and Gln136. At Tyr139 the chain carries Phosphotyrosine. Glu141 provides a ligand contact to Ca(2+).

The protein belongs to the calmodulin family. Homotetramer. Interacts with MYO1C, MYO5A and RRAD. Interacts with MYO10. Interacts with CEP97, CCP110, TTN/titin and SRY. Interacts with USP6; the interaction is calcium dependent. Interacts with CDK5RAP2. Interacts with SCN5A. Interacts with RYR1. Interacts with FCHO1. Interacts with MIP in a 1:2 stoichiometry; the interaction with the cytoplasmic domains from two MIP subunits promotes MIP water channel closure. Interacts with ORAI1; this may play a role in the regulation of ORAI1-mediated calcium transport. Interacts with IQCF1. Interacts with SYT7. Interacts with CEACAM1 (via cytoplasmic domain); this interaction is in a calcium dependent manner and reduces homophilic cell adhesion through dissociation of dimer. Interacts with RYR2; regulates RYR2 calcium-release channel activity. Interacts with PCP4; regulates calmodulin calcium-binding. Interacts with the heterotetrameric KCNQ2 and KCNQ3 channel; the interaction is calcium-independent, constitutive and participates in the proper assembly of a functional heterotetrameric M channel. Interacts with alpha-synuclein/SNCA. Interacts with SLC9A1 in a calcium-dependent manner. In the absence of Ca(+2), interacts with GIMAP4 (via IQ domain). Interacts with SCN8A; the interaction modulates the inactivation rate of SCN8A. Interaction with KIF1A; the interaction is increased in presence of calcium and increases neuronal dense core vesicles motility. Interacts with KCNN3. Interacts with KCNQ1 (via C-terminus); forms a heterooctameric structure (with 4:4 KCNQ1:CALM stoichiometry) in a calcium-independent manner. Interacts with PIK3C3; the interaction modulates PIK3C3 kinase activity. Interacts with HINT1; interaction increases in the presence of calcium ions. Interacts with HINT3. Interacts with GARIN2; in mature sperm flagella. Interacts with IQUB. Interacts with SLC26A5 (via STAS domain); this interaction is calcium-dependent and the STAS domain interacts with only one lobe of CALM which is an elongated conformation. Ca(2+)-bound CALM1 binds CNGA1:CNGB1 channel (via CaM1 and CaM2 regions); this interaction modulates the affinity of the channel for cNMPs in response to intracellular Ca(2+) levels. Interacts with ITPR1; this interaction inhibits inositol 1,4,5 trisphosphate binding in both the presence and absence of calcium and 1,4,5 trisphosphate-induced calcium release in the presence of calcium. Component of the SIFI complex. Interacts with KCNN4; this interaction allows channel opening. Interacts with KCNN2; this interaction regulates the channel activity through calcium-binding. As to quaternary structure, (Microbial infection) Interacts with Rubella virus protease/methyltransferase p150. In terms of assembly, (Microbial infection) Interacts with Legionella pneumophila glutamylase SidJ. (Microbial infection) Interacts with C.violaceum CopC. C.violaceum CopC interacts specifically with the apo form of calmodulin. As to quaternary structure, (Microbial infection) Interacts with S.flexneri OspC1 and OspC3. S.flexneri OspC1 and OspC3 interact specifically with the apo form of calmodulin and prevents calcium-binding. In terms of processing, ubiquitination results in a strongly decreased activity. Phosphorylation results in a decreased activity.

The protein localises to the cytoplasm. It is found in the cytoskeleton. It localises to the spindle. The protein resides in the spindle pole. Its subcellular location is the microtubule organizing center. The protein localises to the centrosome. It is found in the cell projection. It localises to the cilium. The protein resides in the flagellum. (Microbial infection) Inactivated by S.flexneri OspC1 and OspC3 proteins, which specifically bind the apo-form of calmodulin, thereby preventing calcium-binding and activity. Its function is as follows. Calmodulin acts as part of a calcium signal transduction pathway by mediating the control of a large number of enzymes, ion channels, aquaporins and other proteins through calcium-binding. Calcium-binding is required for the activation of calmodulin. Among the enzymes to be stimulated by the calmodulin-calcium complex are a number of protein kinases, such as myosin light-chain kinases and calmodulin-dependent protein kinase type II (CaMK2), and phosphatases. Together with CCP110 and centrin, is involved in a genetic pathway that regulates the centrosome cycle and progression through cytokinesis. Is a regulator of voltage-dependent L-type calcium channels. Mediates calcium-dependent inactivation of CACNA1C. Positively regulates calcium-activated potassium channel activity of KCNN2. Forms a potassium channel complex with KCNQ1 and regulates electrophysiological activity of the channel via calcium-binding. Acts as a sensor to modulate the endoplasmic reticulum contacts with other organelles mediated by VMP1:ATP2A2. Functionally, (Microbial infection) Required for Legionella pneumophila SidJ glutamylase activity. (Microbial infection) Required for C.violaceum CopC and S.flexneri OspC3 arginine ADP-riboxanase activity. The sequence is that of Calmodulin-1 from Homo sapiens (Human).